The primary structure comprises 1019 residues: Phosphatidylinositol 3,4,5-trisphosphate 5-phosphatase 1 (1019 aa).

The region spanning 5-101 (WYHGNITRSK…GLVTHLQYPI (97 aa)) is the SH2 domain. Residues 103–116 (KEEEGPEEPDEEQE) show a composition bias toward acidic residues. Disordered stretches follow at residues 103-133 (KEEEGPEEPDEEQEPAPPNVPPRNFAFTPPS) and 909-1019 (ETQN…PPTA). The short motif at 120–125 (PNVPPR) is the SH3-binding 1 element. 2 stretches are compositionally biased toward polar residues: residues 909–931 (ETQNSMDHTASVAAISSQAKQSP) and 958–980 (PITSPPRTTLSTQKFSHSNTNRT). Positions 966-971 (TLSTQK) match the SH3-binding 2 motif. Positions 1004–1007 (NPLY) match the NPXY motif motif. At tyrosine 1007 the chain carries Phosphotyrosine. Residues 1010–1019 (VNNTLYPPTA) are compositionally biased toward polar residues.

Belongs to the inositol 1,4,5-trisphosphate 5-phosphatase family. Tyrosine phosphorylated by the members of the SRC family after exposure to a diverse array of extracellular stimuli.

Its subcellular location is the cytoplasm. It localises to the cell membrane. The protein localises to the membrane raft. It is found in the cytoskeleton. The catalysed reaction is a 1,2-diacyl-sn-glycero-3-phospho-(1D-myo-inositol-3,4,5-trisphosphate) + H2O = a 1,2-diacyl-sn-glycero-3-phospho-(1D-myo-inositol-3,4-bisphosphate) + phosphate. The enzyme catalyses 1D-myo-inositol 1,3,4,5-tetrakisphosphate + H2O = 1D-myo-inositol 1,3,4-trisphosphate + phosphate. It catalyses the reaction a 1,2-diacyl-sn-glycero-3-phospho-(1D-myo-inositol-4,5-bisphosphate) + H2O = a 1,2-diacyl-sn-glycero-3-phospho-(1D-myo-inositol 4-phosphate) + phosphate. In terms of biological role, phosphatidylinositol (PtdIns) phosphatase that specifically hydrolyzes the 5-phosphate of phosphatidylinositol-3,4,5-trisphosphate (PtdIns(3,4,5)P3) to produce PtdIns(3,4)P2, thereby negatively regulating the PI3K (phosphoinositide 3-kinase) pathways. Able also to hydrolyzes the 5-phosphate of phosphatidylinositol-4,5-bisphosphate (PtdIns(4,5)P3) and inositol 1,3,4,5-tetrakisphosphate. Acts as a negative regulator of B-cell antigen receptor signaling. Mediates signaling from the FC-gamma-RIIB receptor (FCGR2B), playing a central role in terminating signal transduction from activating immune/hematopoietic cell receptor systems. Acts as a negative regulator of myeloid cell proliferation/survival and chemotaxis, mast cell degranulation, immune cells homeostasis, integrin alpha-IIb/beta-3 signaling in platelets and JNK signaling in B-cells. This chain is Phosphatidylinositol 3,4,5-trisphosphate 5-phosphatase 1 (inpp5d), found in Xenopus laevis (African clawed frog).